A 760-amino-acid polypeptide reads, in one-letter code: Molybdenum cofactor sulfurase 2 (760 aa).

At K223 the chain carries N6-(pyridoxal phosphate)lysine. Residue C389 is part of the active site. The MOSC domain occupies 608-758; the sequence is QSDDEARTLR…LHCGSPLQVV (151 aa).

It belongs to the class-V pyridoxal-phosphate-dependent aminotransferase family. MOCOS subfamily. Pyridoxal 5'-phosphate is required as a cofactor.

The enzyme catalyses Mo-molybdopterin + L-cysteine + AH2 = thio-Mo-molybdopterin + L-alanine + A + H2O. In terms of biological role, sulfurates the molybdenum cofactor. Sulfation of molybdenum is essential for xanthine dehydrogenase (XDH) and aldehyde oxidase (ADO) enzymes in which molybdenum cofactor is liganded by 1 oxygen and 1 sulfur atom in active form. The polypeptide is Molybdenum cofactor sulfurase 2 (Culex quinquefasciatus (Southern house mosquito)).